Here is a 670-residue protein sequence, read N- to C-terminus: Acetolactate synthase, chloroplastic (670 aa).

2 stretches are compositionally biased toward low complexity: residues 1 to 48 (MAAA…SSSS) and 55 to 77 (KSSS…TTPS). A chloroplast-targeting transit peptide spans 1-55 (MAAATTTTTTSSSISFSTKPSPSSSKSPLPISRFSLPFSLNPNKSSSSSRRRGIK). Residues 1-94 (MAAATTTTTT…ETFISRFAPD (94 aa)) form a disordered region. Residue E144 participates in thiamine diphosphate binding. Position 186 (S186) interacts with FAD. Q207 is a binding site for thiamine diphosphate. (R)-imazaquin is bound by residues K220 and R246. R246 is a binding site for FAD. A chlorimuron-ethyl-binding site is contributed by K256. Residues G308 and 331–332 (TL) each bind FAD. Cysteine sulfinic acid (-SO2H) is present on C340. FAD-binding positions include 349–352 (LGMH) and 371–375 (GVRFD). 376 to 377 (DR) contributes to the chlorimuron-ethyl binding site. FAD is bound by residues 395 to 396 (DI) and 414 to 415 (DV). A coiled-coil region spans residues 414–446 (DVKLALQGMNKVLENRAEELKLDFGVWRNELNV). Residue 487-488 (QH) coordinates thiamine diphosphate. 508 to 509 (GG) is a binding site for FAD. Residues 511–513 (GAM), 538–540 (DGS), and 565–570 (NQHLGM) each bind thiamine diphosphate. Positions 538, 565, and 567 each coordinate Mg(2+). Positions 574 and 653 each coordinate chlorimuron-ethyl.

Belongs to the TPP enzyme family. In terms of assembly, homodimer or homotetramer. The acetolactate synthase complex contains both large catalytic subunits and small regulatory subunits. Homodimer. The acetolactate synthase complex contains 4 homodimers of the large catalytic subunits, and 1 homotetramer of the small regulatory subunits. Mg(2+) serves as cofactor. It depends on FAD as a cofactor. The cofactor is thiamine diphosphate.

Its subcellular location is the plastid. The protein resides in the chloroplast. The catalysed reaction is 2 pyruvate + H(+) = (2S)-2-acetolactate + CO2. It functions in the pathway amino-acid biosynthesis; L-isoleucine biosynthesis; L-isoleucine from 2-oxobutanoate: step 1/4. Its pathway is amino-acid biosynthesis; L-valine biosynthesis; L-valine from pyruvate: step 1/4. Its activity is regulated as follows. Inhibited by asymmetric aryl disulfides, triazolopyrimidine sulfonanilide compounds, isatin derivatives, and sulfonylurea and imidazolinone herbicides. Insensitive to feed-back inhibition by branched-chain amino acids. In terms of biological role, catalyzes the formation of acetolactate from pyruvate, the first step in valine and isoleucine biosynthesis. This Arabidopsis thaliana (Mouse-ear cress) protein is Acetolactate synthase, chloroplastic (ALS).